Reading from the N-terminus, the 449-residue chain is Bifunctional protein GlmU (449 aa).

The segment at 1–229 (MNHFAVILAA…FEETIGVNDR (229 aa)) is pyrophosphorylase. UDP-N-acetyl-alpha-D-glucosamine-binding positions include 8–11 (LAAG), K22, Q72, and 77–78 (GT). D102 provides a ligand contact to Mg(2+). Positions 139, 154, 169, and 227 each coordinate UDP-N-acetyl-alpha-D-glucosamine. N227 lines the Mg(2+) pocket. The interval 230-250 (VALAQAETSMRKRTNEHWMRQ) is linker. Residues 251–449 (GVTFIDPAST…ERQTTKPDYR (199 aa)) form an N-acetyltransferase region. R332 and K350 together coordinate UDP-N-acetyl-alpha-D-glucosamine. The active-site Proton acceptor is the H362. Residues Y365 and N376 each contribute to the UDP-N-acetyl-alpha-D-glucosamine site. Residues 385-386 (NY), A422, and R439 each bind acetyl-CoA.

In the N-terminal section; belongs to the N-acetylglucosamine-1-phosphate uridyltransferase family. This sequence in the C-terminal section; belongs to the transferase hexapeptide repeat family. As to quaternary structure, homotrimer. It depends on Mg(2+) as a cofactor.

It localises to the cytoplasm. The enzyme catalyses alpha-D-glucosamine 1-phosphate + acetyl-CoA = N-acetyl-alpha-D-glucosamine 1-phosphate + CoA + H(+). It carries out the reaction N-acetyl-alpha-D-glucosamine 1-phosphate + UTP + H(+) = UDP-N-acetyl-alpha-D-glucosamine + diphosphate. Its pathway is nucleotide-sugar biosynthesis; UDP-N-acetyl-alpha-D-glucosamine biosynthesis; N-acetyl-alpha-D-glucosamine 1-phosphate from alpha-D-glucosamine 6-phosphate (route II): step 2/2. The protein operates within nucleotide-sugar biosynthesis; UDP-N-acetyl-alpha-D-glucosamine biosynthesis; UDP-N-acetyl-alpha-D-glucosamine from N-acetyl-alpha-D-glucosamine 1-phosphate: step 1/1. It participates in bacterial outer membrane biogenesis; LPS lipid A biosynthesis. Its function is as follows. Catalyzes the last two sequential reactions in the de novo biosynthetic pathway for UDP-N-acetylglucosamine (UDP-GlcNAc). The C-terminal domain catalyzes the transfer of acetyl group from acetyl coenzyme A to glucosamine-1-phosphate (GlcN-1-P) to produce N-acetylglucosamine-1-phosphate (GlcNAc-1-P), which is converted into UDP-GlcNAc by the transfer of uridine 5-monophosphate (from uridine 5-triphosphate), a reaction catalyzed by the N-terminal domain. This Exiguobacterium sibiricum (strain DSM 17290 / CCUG 55495 / CIP 109462 / JCM 13490 / 255-15) protein is Bifunctional protein GlmU.